A 1183-amino-acid polypeptide reads, in one-letter code: Rab11 family-interacting protein 3 (1183 aa).

The tract at residues 423-448 is disordered; that stretch reads AEDPSTESLPRKNGQEESKSALPVST. Residues 431–441 show a composition bias toward basic and acidic residues; the sequence is LPRKNGQEESK. EF-hand domains lie at 706-741 and 738-773; these read EEQS…YGAE and YGAE…ISNE. Positions 719, 721, 723, 730, 751, 753, and 762 each coordinate Ca(2+). The stretch at 902-1121 forms a coiled coil; sequence ELEKDSLESE…NGQIINLSIQ (220 aa). Residues 911 to 1015 form an ARF-binding domain (ABD) region; the sequence is EEQHARLRQE…LQDEADDITQ (105 aa). A disordered region spans residues 1005–1044; that stretch reads KLQDEADDITQRLNEESESRRKMSDKLSHERHTNQKEKEC. Residues 1121–1183 enclose the FIP-RBD domain; that stretch reads QGAKSLFTES…ESNPSILEVK (63 aa).

The protein resides in the recycling endosome membrane. Its subcellular location is the cytoplasm. The protein localises to the cytoskeleton. It localises to the microtubule organizing center. It is found in the centrosome. The protein resides in the cleavage furrow. Its subcellular location is the midbody. The protein localises to the golgi apparatus membrane. It localises to the golgi apparatus. It is found in the trans-Golgi network membrane. Functionally, downstream effector molecule for Rab11 GTPase which acts as a regulator of endocytic trafficking, cytokinesis and intracellular ciliogenesis by participating in membrane delivery. The chain is Rab11 family-interacting protein 3 (rab11fip3) from Danio rerio (Zebrafish).